A 339-amino-acid chain; its full sequence is Anthranilate phosphoribosyltransferase (339 aa).

Residues Gly-79, 82–83 (GD), Ser-87, 89–92 (NIST), 107–115 (KHGNRSISS), and Ser-119 each bind 5-phospho-alpha-D-ribose 1-diphosphate. Gly-79 contributes to the anthranilate binding site. Ser-91 contacts Mg(2+). Asn-110 is a binding site for anthranilate. Arg-165 serves as a coordination point for anthranilate. Mg(2+) contacts are provided by Asp-224 and Glu-225.

This sequence belongs to the anthranilate phosphoribosyltransferase family. Homodimer. The cofactor is Mg(2+).

It carries out the reaction N-(5-phospho-beta-D-ribosyl)anthranilate + diphosphate = 5-phospho-alpha-D-ribose 1-diphosphate + anthranilate. It functions in the pathway amino-acid biosynthesis; L-tryptophan biosynthesis; L-tryptophan from chorismate: step 2/5. Functionally, catalyzes the transfer of the phosphoribosyl group of 5-phosphorylribose-1-pyrophosphate (PRPP) to anthranilate to yield N-(5'-phosphoribosyl)-anthranilate (PRA). The polypeptide is Anthranilate phosphoribosyltransferase (Listeria welshimeri serovar 6b (strain ATCC 35897 / DSM 20650 / CCUG 15529 / CIP 8149 / NCTC 11857 / SLCC 5334 / V8)).